Reading from the N-terminus, the 285-residue chain is 4-hydroxybenzoate octaprenyltransferase (285 aa).

A run of 8 helical transmembrane segments spans residues 28–48 (LWAM…WIFV), 86–106 (IAAW…FALV), 110–130 (NALT…YPFF), 133–153 (FFAI…PMAF), 165–185 (WLML…YAMV), 210–230 (IMLC…LLGL), 232–252 (WPYW…YTLI), and 262–284 (AAFR…AYAI).

This sequence belongs to the UbiA prenyltransferase family. Requires Mg(2+) as cofactor.

The protein resides in the cell inner membrane. The enzyme catalyses all-trans-octaprenyl diphosphate + 4-hydroxybenzoate = 4-hydroxy-3-(all-trans-octaprenyl)benzoate + diphosphate. It functions in the pathway cofactor biosynthesis; ubiquinone biosynthesis. Catalyzes the prenylation of para-hydroxybenzoate (PHB) with an all-trans polyprenyl group. Mediates the second step in the final reaction sequence of ubiquinone-8 (UQ-8) biosynthesis, which is the condensation of the polyisoprenoid side chain with PHB, generating the first membrane-bound Q intermediate 3-octaprenyl-4-hydroxybenzoate. In Cupriavidus necator (strain ATCC 17699 / DSM 428 / KCTC 22496 / NCIMB 10442 / H16 / Stanier 337) (Ralstonia eutropha), this protein is 4-hydroxybenzoate octaprenyltransferase.